Reading from the N-terminus, the 148-residue chain is NADPH-dependent 7-cyano-7-deazaguanine reductase (148 aa).

Cys50 (thioimide intermediate) is an active-site residue. Asp57 serves as the catalytic Proton donor. Substrate-binding positions include 72–74 and 91–92; these read VES and HE.

This sequence belongs to the GTP cyclohydrolase I family. QueF type 1 subfamily.

It is found in the cytoplasm. The enzyme catalyses 7-aminomethyl-7-carbaguanine + 2 NADP(+) = 7-cyano-7-deazaguanine + 2 NADPH + 3 H(+). It participates in tRNA modification; tRNA-queuosine biosynthesis. Its function is as follows. Catalyzes the NADPH-dependent reduction of 7-cyano-7-deazaguanine (preQ0) to 7-aminomethyl-7-deazaguanine (preQ1). This is NADPH-dependent 7-cyano-7-deazaguanine reductase from Helicobacter pylori (strain ATCC 700392 / 26695) (Campylobacter pylori).